The chain runs to 404 residues: Cysteine desulfurase IscS (404 aa).

Pyridoxal 5'-phosphate-binding positions include Ala75–Thr76, Asn155, Gln183, and Ser203–His205. The residue at position 206 (Lys206) is an N6-(pyridoxal phosphate)lysine. Thr243 is a binding site for pyridoxal 5'-phosphate. The Cysteine persulfide intermediate role is filled by Cys328. Cys328 is a [2Fe-2S] cluster binding site.

It belongs to the class-V pyridoxal-phosphate-dependent aminotransferase family. NifS/IscS subfamily. In terms of assembly, homodimer. Forms a heterotetramer with IscU, interacts with other sulfur acceptors. Requires pyridoxal 5'-phosphate as cofactor.

The protein localises to the cytoplasm. The enzyme catalyses (sulfur carrier)-H + L-cysteine = (sulfur carrier)-SH + L-alanine. It functions in the pathway cofactor biosynthesis; iron-sulfur cluster biosynthesis. Master enzyme that delivers sulfur to a number of partners involved in Fe-S cluster assembly, tRNA modification or cofactor biosynthesis. Catalyzes the removal of elemental sulfur atoms from cysteine to produce alanine. Functions as a sulfur delivery protein for Fe-S cluster synthesis onto IscU, an Fe-S scaffold assembly protein, as well as other S acceptor proteins. The sequence is that of Cysteine desulfurase IscS from Actinobacillus succinogenes (strain ATCC 55618 / DSM 22257 / CCUG 43843 / 130Z).